Reading from the N-terminus, the 220-residue chain is Putative O-methyltransferase Mjls_4009 (220 aa).

Residues valine 47, glutamate 69, 71–72 (GT), serine 77, aspartate 95, and valine 96 each bind S-adenosyl-L-methionine. Aspartate 143 contacts substrate. An S-adenosyl-L-methionine-binding site is contributed by aspartate 145.

Belongs to the class I-like SAM-binding methyltransferase superfamily. Cation-dependent O-methyltransferase family.

The protein is Putative O-methyltransferase Mjls_4009 of Mycobacterium sp. (strain JLS).